The primary structure comprises 506 residues: MEKFQGYLEFDGARQQSFLYPLFFREYIYVLAYDHGLNRLNRNRSIFLENADADYDKKYSSLIVKRLILRMYEQNRLSIPTTDLHKNPFLGHTNPLYYQMISVLFAVIVEIPFSLRLGSSFEGKQLKKSYNLQSIHSIFPFLEDKFSHSNYVLDVLIPYPIHLEILVQTLRYRVKDASSLHFFRLCXYEYCNWKNFDIKKKLILNPRFFLFLYNSHVCEYESIFFFLRKRSSHLRSTAYEVLFERILFYAKIQHFLKVFVNNFPAILGLLKDPFLHYVRYHGKSILATKDTPLLMNKWKFYFVNLWQFYFSVWFQSQKIHINQLSKDNLEFLGYLSSLRLNPLVVRSQMLENSFLIDNIRIKLDNKIPISSIIGSLTKDKFCNLLGHPISKANWTESSDSDILNRFVRICRNISHYYSGSSKKKHLYRIKYILRLCCVKTLARKHKSTVRAFLKRLGSGLLEEFLTGEDQVLSLIFPRSYYASKRLYRVRVWYLDILYLNDLVNHD.

Belongs to the intron maturase 2 family. MatK subfamily.

The protein localises to the plastid. It is found in the chloroplast. In terms of biological role, usually encoded in the trnK tRNA gene intron. Probably assists in splicing its own and other chloroplast group II introns. This Arabis alpina (Alpine rock-cress) protein is Maturase K.